Consider the following 178-residue polypeptide: Killin (178 aa).

The DNA-binding element occupies 8–50; sequence SARPGRTVHVWGYRVEWKVRNGRKLQPSEWAGRGDLGGFKRRW.

The protein localises to the nucleus. Functionally, DNA-binding protein involved in S phase checkpoint control-coupled apoptosis by mediating p53/TP53-induced apoptosis. Has the ability to inhibit DNA synthesis and S phase arrest coupled to apoptosis. Has affinity to both double- and single-stranded DNA. This is Killin (KLLN) from Homo sapiens (Human).